A 171-amino-acid chain; its full sequence is CASP-like protein 1C3 (171 aa).

Residues 1-6 are Cytoplasmic-facing; the sequence is MVKPKR. The chain crosses the membrane as a helical span at residues 7-27; the sequence is LLSLLLRLIAFGATLAAVIIM. Over 28-52 the chain is Extracellular; the sequence is ATSHEKGSFFALSYEAKYSDTPAFK. Residues 53-73 form a helical membrane-spanning segment; that stretch reads YFVIANAIVTVYGFLALFIPS. The Cytoplasmic segment spans residues 74–79; it reads ESPLWR. A helical membrane pass occupies residues 80 to 100; it reads LVLALDLVFTMLLISSISAAL. Topologically, residues 101–130 are extracellular; it reads AVAQVGKKGNSSAGWLPVCGQVTKYCNQVT. The N-linked (GlcNAc...) asparagine glycan is linked to Asn110. Residues 131–151 traverse the membrane as a helical segment; the sequence is GALVAGFIAIITYIILLLYSI. Residues 152–171 are Cytoplasmic-facing; it reads YTFLNSLLGKTPCRLSSPGI.

This sequence belongs to the Casparian strip membrane proteins (CASP) family. In terms of assembly, homodimer and heterodimers.

The protein localises to the cell membrane. This Populus trichocarpa (Western balsam poplar) protein is CASP-like protein 1C3.